The chain runs to 207 residues: Guanylate kinase (207 aa).

The region spanning 6-185 (GLLIVLSGPS…AKQRIQSIVE (180 aa)) is the Guanylate kinase-like domain. 13–20 (GPSGVGKG) contacts ATP.

Belongs to the guanylate kinase family.

The protein resides in the cytoplasm. It carries out the reaction GMP + ATP = GDP + ADP. Its function is as follows. Essential for recycling GMP and indirectly, cGMP. The polypeptide is Guanylate kinase (Staphylococcus saprophyticus subsp. saprophyticus (strain ATCC 15305 / DSM 20229 / NCIMB 8711 / NCTC 7292 / S-41)).